Here is a 450-residue protein sequence, read N- to C-terminus: Tubulin beta-1 chain (450 aa).

Positions 11, 69, 138, 142, 143, 144, 204, and 226 each coordinate GTP. Glutamate 69 serves as a coordination point for Mg(2+). The interval 426–450 (QDATADEDEYGEEEGDEEEYGQHDI) is disordered. Acidic residues predominate over residues 429–444 (TADEDEYGEEEGDEEE).

Belongs to the tubulin family. As to quaternary structure, dimer of alpha and beta chains. A typical microtubule is a hollow water-filled tube with an outer diameter of 25 nm and an inner diameter of 15 nM. Alpha-beta heterodimers associate head-to-tail to form protofilaments running lengthwise along the microtubule wall with the beta-tubulin subunit facing the microtubule plus end conferring a structural polarity. Microtubules usually have 13 protofilaments but different protofilament numbers can be found in some organisms and specialized cells. Mg(2+) is required as a cofactor.

It is found in the cytoplasm. Its subcellular location is the cytoskeleton. Functionally, tubulin is the major constituent of microtubules, a cylinder consisting of laterally associated linear protofilaments composed of alpha- and beta-tubulin heterodimers. Microtubules grow by the addition of GTP-tubulin dimers to the microtubule end, where a stabilizing cap forms. Below the cap, tubulin dimers are in GDP-bound state, owing to GTPase activity of alpha-tubulin. This Pisum sativum (Garden pea) protein is Tubulin beta-1 chain (TUBB1).